A 185-amino-acid chain; its full sequence is Ribosome-recycling factor (185 aa).

Belongs to the RRF family.

It is found in the cytoplasm. Functionally, responsible for the release of ribosomes from messenger RNA at the termination of protein biosynthesis. May increase the efficiency of translation by recycling ribosomes from one round of translation to another. The polypeptide is Ribosome-recycling factor (Xanthomonas campestris pv. campestris (strain 8004)).